Consider the following 565-residue polypeptide: Probable peptidoglycan D,D-transpeptidase PbpC (565 aa).

A helical membrane pass occupies residues 10-30 (FILVVTLFVLASLAVSGRLVY). The active-site Acyl-ester intermediate is S289.

The protein belongs to the transpeptidase family. FtsI subfamily.

It is found in the cell inner membrane. It carries out the reaction Preferential cleavage: (Ac)2-L-Lys-D-Ala-|-D-Ala. Also transpeptidation of peptidyl-alanyl moieties that are N-acyl substituents of D-alanine.. It participates in cell wall biogenesis; peptidoglycan biosynthesis. Catalyzes cross-linking of the peptidoglycan cell wall at the division septum. Binds penicillin. In Pseudomonas aeruginosa (strain ATCC 15692 / DSM 22644 / CIP 104116 / JCM 14847 / LMG 12228 / 1C / PRS 101 / PAO1), this protein is Probable peptidoglycan D,D-transpeptidase PbpC.